A 100-amino-acid polypeptide reads, in one-letter code: MAKKSLIYREKKRQKLEKKYHLIRRSSKKEISKIPSLSEKWKIHGKLQSPPRNSAPTRLHRRCFSTGRPRANYRDFGLSGHILREMVHACLLPGATRSSW.

This sequence belongs to the universal ribosomal protein uS14 family. As to quaternary structure, part of the 30S ribosomal subunit.

It is found in the plastid. Its subcellular location is the chloroplast. In terms of biological role, binds 16S rRNA, required for the assembly of 30S particles. This Olimarabidopsis pumila (Dwarf rocket) protein is Small ribosomal subunit protein uS14c.